A 75-amino-acid chain; its full sequence is uncharacterized protein (75 aa).

A dksA C4-type zinc finger spans residues 43–67; that stretch reads CSECGLPIPTTRLRANPFAHRCVSC.

This is an uncharacterized protein from Haemophilus influenzae (strain ATCC 51907 / DSM 11121 / KW20 / Rd).